A 121-amino-acid chain; its full sequence is Small ribosomal subunit protein uS13 (121 aa).

The segment at 94-121 is disordered; sequence SLPVRGQNTKNNSRTRKGPRRTVANKKK. The segment covering 106–121 has biased composition (basic residues); it reads SRTRKGPRRTVANKKK.

The protein belongs to the universal ribosomal protein uS13 family. Part of the 30S ribosomal subunit. Forms a loose heterodimer with protein S19. Forms two bridges to the 50S subunit in the 70S ribosome.

Its function is as follows. Located at the top of the head of the 30S subunit, it contacts several helices of the 16S rRNA. In the 70S ribosome it contacts the 23S rRNA (bridge B1a) and protein L5 of the 50S subunit (bridge B1b), connecting the 2 subunits; these bridges are implicated in subunit movement. Contacts the tRNAs in the A and P-sites. The protein is Small ribosomal subunit protein uS13 of Exiguobacterium sp. (strain ATCC BAA-1283 / AT1b).